Reading from the N-terminus, the 528-residue chain is Chromosomal replication initiator protein DnaA (528 aa).

The interval 1 to 104 is domain I, interacts with DnaA modulators; it reads MNDDPNALAR…PVDDEPESEA (104 aa). The segment at 93-159 is disordered; that stretch reads AAPVDDEPES…DFEEVDDDSE (67 aa). The span at 104-123 shows a compositional bias: basic and acidic residues; it reads APSRERRPDPEPVHTPRHLE. The tract at residues 105 to 187 is domain II; the sequence is PSRERRPDPE…GPAPAATGGN (83 aa). Residues 149-159 show a composition bias toward acidic residues; the sequence is TDFEEVDDDSE. The segment at 188–404 is domain III, AAA+ region; it reads SLNAKYTFDT…GALIRVTAFA (217 aa). Residues glycine 232, glycine 234, lysine 235, and threonine 236 each coordinate ATP. Residues 405–528 form a domain IV, binds dsDNA region; sequence SLNRQPLDLT…TARIKQRSKR (124 aa).

Belongs to the DnaA family. As to quaternary structure, oligomerizes as a right-handed, spiral filament on DNA at oriC.

The protein localises to the cytoplasm. Plays an essential role in the initiation and regulation of chromosomal replication. ATP-DnaA binds to the origin of replication (oriC) to initiate formation of the DNA replication initiation complex once per cell cycle. Binds the DnaA box (a 9 base pair repeat at the origin) and separates the double-stranded (ds)DNA. Forms a right-handed helical filament on oriC DNA; dsDNA binds to the exterior of the filament while single-stranded (ss)DNA is stabiized in the filament's interior. The ATP-DnaA-oriC complex binds and stabilizes one strand of the AT-rich DNA unwinding element (DUE), permitting loading of DNA polymerase. After initiation quickly degrades to an ADP-DnaA complex that is not apt for DNA replication. Binds acidic phospholipids. The protein is Chromosomal replication initiator protein DnaA of Rhodococcus opacus (strain B4).